A 203-amino-acid polypeptide reads, in one-letter code: Histone deacetylase HDT4 (203 aa).

Residues Glu-2 to Gly-5 form a required to repress transcription region. The disordered stretch occupies residues Ala-121–Lys-203. Acidic residues predominate over residues Asn-129–Ala-157. Residues Gly-180 to Cys-193 are compositionally biased toward basic residues.

The protein belongs to the histone deacetylase HD2 family. As to expression, confined to stems and flowers with young siliques.

It is found in the nucleus. The protein localises to the nucleolus. Probably mediates the deacetylation of lysine residues lysine residues on the N-terminal part of the core histones (H2A, H2B, H3 and H4). Histone deacetylation gives a tag for epigenetic repression and plays an important role in transcriptional regulation, cell cycle progression and developmental events. The polypeptide is Histone deacetylase HDT4 (HDT4) (Arabidopsis thaliana (Mouse-ear cress)).